The following is a 215-amino-acid chain: 3-isopropylmalate dehydratase small subunit (215 aa).

The protein belongs to the LeuD family. LeuD type 1 subfamily. As to quaternary structure, heterodimer of LeuC and LeuD.

It carries out the reaction (2R,3S)-3-isopropylmalate = (2S)-2-isopropylmalate. It participates in amino-acid biosynthesis; L-leucine biosynthesis; L-leucine from 3-methyl-2-oxobutanoate: step 2/4. Its function is as follows. Catalyzes the isomerization between 2-isopropylmalate and 3-isopropylmalate, via the formation of 2-isopropylmaleate. This Xanthomonas axonopodis pv. citri (strain 306) protein is 3-isopropylmalate dehydratase small subunit.